Here is a 493-residue protein sequence, read N- to C-terminus: Glutamate--tRNA ligase (493 aa).

A 'HIGH' region motif is present at residues 10 to 20 (PSPTGTPHVGL). The short motif at 254-258 (KLSKR) is the 'KMSKS' region element. Residue Lys257 coordinates ATP.

Belongs to the class-I aminoacyl-tRNA synthetase family. Glutamate--tRNA ligase type 1 subfamily. Monomer.

The protein localises to the cytoplasm. It catalyses the reaction tRNA(Glu) + L-glutamate + ATP = L-glutamyl-tRNA(Glu) + AMP + diphosphate. Functionally, catalyzes the attachment of glutamate to tRNA(Glu) in a two-step reaction: glutamate is first activated by ATP to form Glu-AMP and then transferred to the acceptor end of tRNA(Glu). The protein is Glutamate--tRNA ligase of Corynebacterium efficiens (strain DSM 44549 / YS-314 / AJ 12310 / JCM 11189 / NBRC 100395).